A 320-amino-acid chain; its full sequence is tRNA U34 carboxymethyltransferase (320 aa).

Residues Lys89, Trp103, Lys108, Gly128, 150–152 (DPT), 179–180 (IE), Met194, Tyr198, and Arg313 each bind carboxy-S-adenosyl-L-methionine.

This sequence belongs to the class I-like SAM-binding methyltransferase superfamily. CmoB family. In terms of assembly, homotetramer.

The enzyme catalyses carboxy-S-adenosyl-L-methionine + 5-hydroxyuridine(34) in tRNA = 5-carboxymethoxyuridine(34) in tRNA + S-adenosyl-L-homocysteine + H(+). Catalyzes carboxymethyl transfer from carboxy-S-adenosyl-L-methionine (Cx-SAM) to 5-hydroxyuridine (ho5U) to form 5-carboxymethoxyuridine (cmo5U) at position 34 in tRNAs. This Actinobacillus pleuropneumoniae serotype 3 (strain JL03) protein is tRNA U34 carboxymethyltransferase.